Reading from the N-terminus, the 403-residue chain is Putative F-box/LRR-repeat protein At5g38386 (403 aa).

Positions 1 to 47 (MDHLSNLPDELLCHIMSFLTTKEAALISVLSKRWRNLIAFVPNLDIF) constitute an F-box domain. LRR repeat units lie at residues 64–91 (IRQL…SLCC), 93–119 (GGSY…DLSM), 131–156 (VFEN…VMNH), 175–203 (LKTL…SYSD), 243–274 (YLYF…SIKS), and 275–300 (VESR…VLEA).

In Arabidopsis thaliana (Mouse-ear cress), this protein is Putative F-box/LRR-repeat protein At5g38386.